A 400-amino-acid chain; its full sequence is Phosphoglycerate kinase (400 aa).

Substrate is bound by residues 24–26, Arg-40, 63–66, Arg-121, and Arg-154; these read DFN and HFGR. Residues Lys-205, Gly-296, Glu-327, and 356-359 each bind ATP; that span reads GGDS.

Belongs to the phosphoglycerate kinase family. Monomer.

Its subcellular location is the cytoplasm. It carries out the reaction (2R)-3-phosphoglycerate + ATP = (2R)-3-phospho-glyceroyl phosphate + ADP. It participates in carbohydrate degradation; glycolysis; pyruvate from D-glyceraldehyde 3-phosphate: step 2/5. This chain is Phosphoglycerate kinase, found in Thermosynechococcus vestitus (strain NIES-2133 / IAM M-273 / BP-1).